Consider the following 86-residue polypeptide: Large ribosomal subunit protein bL27 (86 aa).

A compositionally biased stretch (gly residues) spans 1–10; it reads MAQKKGGGST. Positions 1 to 20 are disordered; it reads MAQKKGGGSTRNGRDSESKR.

Belongs to the bacterial ribosomal protein bL27 family.

The chain is Large ribosomal subunit protein bL27 from Bordetella parapertussis (strain 12822 / ATCC BAA-587 / NCTC 13253).